The following is a 203-amino-acid chain: MANYQDITFALAGVCQAAKLVQQLAMNGTVDQEILRTGLSTLLQTAPEDTLAVYGGQKSNLKLGLETLMEQLNGSDVTLNRYWLGLLALEGKLHKNAQAKSELARRIQYLPTQLAHYDLLDEQMLSTLASIYVDVISPLGARIQVQGSPLYLQQLMTQNRIRACLLTGIRSAVLWRQVGGTKWQFLFSRRKLVATAQQIYSSI.

It belongs to the HflD family.

Its subcellular location is the cytoplasm. It localises to the cell inner membrane. The chain is High frequency lysogenization protein HflD homolog from Histophilus somni (strain 2336) (Haemophilus somnus).